The primary structure comprises 127 residues: Fluoride-specific ion channel FluC (127 aa).

4 helical membrane-spanning segments follow: residues 6–26 (LAIS…GLGF), 37–57 (TLLA…FFAA), 67–87 (LLVI…SAEV), and 96–116 (LLWA…MTLL). Na(+)-binding residues include Gly75 and Thr78.

The protein belongs to the fluoride channel Fluc/FEX (TC 1.A.43) family.

The protein resides in the cell inner membrane. It catalyses the reaction fluoride(in) = fluoride(out). Its activity is regulated as follows. Na(+) is not transported, but it plays an essential structural role and its presence is essential for fluoride channel function. In terms of biological role, fluoride-specific ion channel. Important for reducing fluoride concentration in the cell, thus reducing its toxicity. This Tolumonas auensis (strain DSM 9187 / NBRC 110442 / TA 4) protein is Fluoride-specific ion channel FluC.